Here is a 150-residue protein sequence, read N- to C-terminus: Large ribosomal subunit protein uL13 (150 aa).

Belongs to the universal ribosomal protein uL13 family. As to quaternary structure, part of the 50S ribosomal subunit.

Functionally, this protein is one of the early assembly proteins of the 50S ribosomal subunit, although it is not seen to bind rRNA by itself. It is important during the early stages of 50S assembly. The chain is Large ribosomal subunit protein uL13 from Persephonella marina (strain DSM 14350 / EX-H1).